We begin with the raw amino-acid sequence, 637 residues long: Biosynthetic arginine decarboxylase (637 aa).

N6-(pyridoxal phosphate)lysine is present on Lys-101. 286-296 (FDVGGGLAVDY) contacts substrate.

This sequence belongs to the Orn/Lys/Arg decarboxylase class-II family. SpeA subfamily. It depends on Mg(2+) as a cofactor. The cofactor is pyridoxal 5'-phosphate.

It carries out the reaction L-arginine + H(+) = agmatine + CO2. Its pathway is amine and polyamine biosynthesis; agmatine biosynthesis; agmatine from L-arginine: step 1/1. In terms of biological role, catalyzes the biosynthesis of agmatine from arginine. The polypeptide is Biosynthetic arginine decarboxylase (Shewanella piezotolerans (strain WP3 / JCM 13877)).